We begin with the raw amino-acid sequence, 456 residues long: CBL-interacting protein kinase 16 (456 aa).

Residues 22–277 (YELGRLLGQG…IPEIMRTPWF (256 aa)) form the Protein kinase domain. Residues 28–36 (LGQGTFAKV) and Lys51 each bind ATP. Residue Asp145 is the Proton acceptor of the active site. An activation loop region spans residues 163–192 (DFGLAALPEQLRQDGLLHTQCGTPAYVAPE). Residues 309 to 335 (AMSPRTCNAFQLISSMSSGFDLSGMFE) form the NAF domain. Residues 339 to 368 (KAATVFTSRAPAATVIQKLEAVGRSLGYSA) are PPI.

The protein belongs to the protein kinase superfamily. CAMK Ser/Thr protein kinase family. SNF1 subfamily. The cofactor is Mn(2+).

It catalyses the reaction L-seryl-[protein] + ATP = O-phospho-L-seryl-[protein] + ADP + H(+). It carries out the reaction L-threonyl-[protein] + ATP = O-phospho-L-threonyl-[protein] + ADP + H(+). Functionally, CIPK serine-threonine protein kinases interact with CBL proteins. Binding of a CBL protein to the regulatory NAF domain of CIPK protein lead to the activation of the kinase in a calcium-dependent manner. This Oryza sativa subsp. japonica (Rice) protein is CBL-interacting protein kinase 16 (CIPK16).